A 229-amino-acid polypeptide reads, in one-letter code: Potassium/proton antiporter CemA (229 aa).

The next 3 helical transmembrane spans lie at 6-26 (AFIPFFYFLSIVFLPWLISLC), 107-127 (ILHFSTNLISFVILSGYSFWG), and 189-209 (ILSGLVSTFPVILDTIFKYWI).

The protein belongs to the CemA family.

It is found in the plastid. Its subcellular location is the chloroplast inner membrane. It carries out the reaction K(+)(in) + H(+)(out) = K(+)(out) + H(+)(in). Functionally, contributes to K(+)/H(+) antiport activity by supporting proton efflux to control proton extrusion and homeostasis in chloroplasts in a light-dependent manner to modulate photosynthesis. Prevents excessive induction of non-photochemical quenching (NPQ) under continuous-light conditions. Indirectly promotes efficient inorganic carbon uptake into chloroplasts. This chain is Potassium/proton antiporter CemA, found in Arabidopsis thaliana (Mouse-ear cress).